The sequence spans 286 residues: uncharacterized protein (286 aa).

The tract at residues 1-47 is disordered; sequence MAIPFLHKGGSDDSTHHHTHDYDHHNHDHHGHDHHSHDSSSNSSSEA. Over residues 9–26 the composition is skewed to basic and acidic residues; sequence GGSDDSTHHHTHDYDHHN. 93-100 contacts GTP; it reads GPVGSGKT.

Belongs to the SIMIBI class G3E GTPase family. UreG subfamily.

The protein localises to the cytoplasm. It localises to the nucleus. Its function is as follows. Probably facilitates nickel incorporation. This is an uncharacterized protein from Schizosaccharomyces pombe (strain 972 / ATCC 24843) (Fission yeast).